Here is a 408-residue protein sequence, read N- to C-terminus: (R)-2-hydroxyisocaproyl-CoA dehydratase alpha subunit (408 aa).

Glutamate 55 lines the substrate pocket. Cysteine 84, cysteine 117, and cysteine 346 together coordinate [4Fe-4S] cluster.

It belongs to the FldB/FldC dehydratase alpha/beta subunit family. As to quaternary structure, part of the heterodimeric complex HadBC composed of (R)-2-hydroxyisocaproyl-CoA dehydratase alpha (HadB) and beta (HadC) subunit. [4Fe-4S] cluster is required as a cofactor.

The enzyme catalyses (R)-2-hydroxy-4-methylpentanoyl-CoA = 4-methylpent-2-enoyl-CoA + H2O. Its activity is regulated as follows. Activated by HadI. Its function is as follows. Involved in the reductive branch of L-leucine fermentation. Catalyzes the irreversible beta/alpha-elimination of water from (R)-2-hydroxyisocaproyl-CoA to yield isocaprenoyl-CoA. This beta/alpha-dehydration depends on the reductive formation of ketyl radicals on the substrate generated by injection of a single electron from the ATP-dependent activator protein HadI. The enzyme is specific for the R-isomer. The protein is (R)-2-hydroxyisocaproyl-CoA dehydratase alpha subunit of Clostridioides difficile (Peptoclostridium difficile).